A 979-amino-acid chain; its full sequence is Receptor-type tyrosine-protein phosphatase-like N (979 aa).

Residues 1 to 34 (MRRPRRPGGLGGSGGLRLLLCLLLLSSRPGGCSA) form the signal peptide. Residues 35-131 (VSAHGCLFDR…RPRDRSGLAP (97 aa)) form an RESP18 homology domain region. The Lumenal portion of the chain corresponds to 35-575 (VSAHGCLFDR…QTAHSTSPMR (541 aa)). C53 and C62 are oxidised to a cystine. Basic and acidic residues-rich tracts occupy residues 112 to 127 (RIPR…RDRS) and 304 to 323 (RAED…RGEK). Disordered regions lie at residues 112–173 (RIPR…SSSL), 289–329 (SRAR…SPAV), and 393–439 (VEGR…ARPP). A Phosphoserine modification is found at S308. The segment covering 415–433 (SPTSSEVQQVPSPVSSEPP) has biased composition (low complexity). An O-linked (GalNAc...) threonine glycan is attached at T441. The sufficient for dimerization of proICA512 stretch occupies residues 449 to 575 (SPLGQSQPTV…QTAHSTSPMR (127 aa)). 2 N-linked (GlcNAc...) asparagine glycosylation sites follow: N506 and N524. The chain crosses the membrane as a helical span at residues 576–600 (SVLLTLVALAGVAGLLVALAVALCV). Residues 601–732 (RQHARQQDKE…PNTCATAQGE (132 aa)) form a sufficient for dimerization of proICA512 region. Residues 601 to 979 (RQHARQQDKE…VNAILKALPQ (379 aa)) lie on the Cytoplasmic side of the membrane. The tract at residues 643 to 680 (NRAEGPPEPSRVSSVSSQFSDAAQASPSSHSSTPSWCE) is disordered. Residues 652–677 (SRVSSVSSQFSDAAQASPSSHSSTPS) are compositionally biased toward low complexity. The 261-residue stretch at 709–969 (LAKEWQALCA…EFALTAVAEE (261 aa)) folds into the Tyrosine-protein phosphatase domain. K754 participates in a covalent cross-link: Glycyl lysine isopeptide (Lys-Gly) (interchain with G-Cter in SUMO).

Belongs to the protein-tyrosine phosphatase family. Receptor class 8 subfamily. As to quaternary structure, homodimer; shown for the unprocessed protein (proICA512) in the endoplasmic reticulum and resolved during protein maturation as ICA512-TMF seems to be predominantly monomeric in secretory granules; however, ICA512-CCF interacts with ICA512-TMF disrupting the ICA512-TMF:SNTB2 complex. The isolated lumenal RESP18 homology domain has been shown to form disulfide-linked homooligomers. Interacts (via cytoplasmic domain) with phosphorylated SNTB2; this protects PTPRN against cleavage by CAPN1 to produce ICA512-CCF. Dephosphorylation of SNTB2 upon insulin stimulation disrupts the interaction and results in PTPRN cleavage. Interacts with SNX19. ICA512-CCF interacts with PIAS4; in the nucleus. Interacts with STAT5B (phosphorylated); down-regulated by ICA512-CCF sumoylation; ICA512-CCF prevents STAT5B dephosphorylation; ICA512-CCF mediates interaction of STAT5B with PIAS4. Interacts (via RESP18 homology domain) with insulin and proinsulin. Interacts with PTPRN2, PTPRA and PTPRE. N-glycosylated. Post-translationally, O-glycosylated with core 1 or possibly core 8 glycans. In terms of processing, subject to proteolytic cleavage at multiple sites. Subject to cleavage on a pair of basic residues. On exocytosis of secretory granules in pancreatic beta-cells ICA512-TMF is transiently inserted in the plasma-membrane and cleaved by mu-type calpain CPN1 to yield ICA512-CCF. Sumoylated at two sites including Lys-754. Sumoylation decreases interaction with STAT5. Expression is restricted to neuroendocrine cells. Found in pancreas, brain and pituitary.

The protein localises to the membrane. Its subcellular location is the cytoplasmic vesicle. The protein resides in the secretory vesicle membrane. It localises to the perikaryon. It is found in the cell projection. The protein localises to the axon. Its subcellular location is the synapse. The protein resides in the cell membrane. It localises to the endosome. It is found in the nucleus. Functionally, plays a role in vesicle-mediated secretory processes. Required for normal accumulation of secretory vesicles in hippocampus, pituitary and pancreatic islets. Required for the accumulation of normal levels of insulin-containing vesicles and preventing their degradation. Plays a role in insulin secretion in response to glucose stimuli. Required for normal accumulation of the neurotransmitters norepinephrine, dopamine and serotonin in the brain. In females, but not in males, required for normal accumulation and secretion of pituitary hormones, such as luteinizing hormone (LH) and follicle-stimulating hormone (FSH). Required to maintain normal levels of renin expression and renin release. Seems to lack intrinsic enzyme activity. May regulate catalytic active protein-tyrosine phosphatases such as PTPRA through dimerization. ICA512-TMF regulates dynamics and exocytosis of insulin secretory granules (SGs); binding of ICA512-TMF to SNTB2/beta-2-syntrophin is proposed to restrain SGs mobility and exocytosis by tethering them to the actin cytoskeleton depending on UTRN; the function is inhibited by cytoplasmic ICA512-CFF dimerizing with ICA512-TMF and displacing SNTB2. In terms of biological role, ICA512-CCF translocated to the nucleus promotes expression of insulin and other granule-related genes; the function implicates binding to and regulating activity of STAT5B probably by preventing its dephosphorylation and potentially by inducing its sumoylation by recruiting PIAS4. Enhances pancreatic beta-cell proliferation by converging with signaling by STAT5B and STAT3. ICA512-CCF located in the cytoplasm regulates dynamics and exocytosis of insulin secretory granules (SGs) by dimerizing with ICA512-TMF and displacing SNTB2 thus enhancing SGs mobility and exocytosis. This chain is Receptor-type tyrosine-protein phosphatase-like N (PTPRN), found in Homo sapiens (Human).